Here is a 431-residue protein sequence, read N- to C-terminus: Argininosuccinate lyase (431 aa).

This sequence belongs to the lyase 1 family. Argininosuccinate lyase subfamily.

The protein resides in the cytoplasm. It catalyses the reaction 2-(N(omega)-L-arginino)succinate = fumarate + L-arginine. The protein operates within amino-acid biosynthesis; L-arginine biosynthesis; L-arginine from L-ornithine and carbamoyl phosphate: step 3/3. The sequence is that of Argininosuccinate lyase from Stenotrophomonas maltophilia (strain K279a).